The sequence spans 86 residues: Putative regulatory protein BBR47_37350 (86 aa).

The protein belongs to the RemA family.

This chain is Putative regulatory protein BBR47_37350, found in Brevibacillus brevis (strain 47 / JCM 6285 / NBRC 100599).